The primary structure comprises 347 residues: Autoinducer 2 import system permease protein LsrC (347 aa).

Helical transmembrane passes span Leu-14–Val-34, Met-39–Leu-59, Gly-72–Cys-92, Leu-93–Leu-113, Ile-115–Trp-135, Val-155–Trp-175, Leu-213–Pro-233, Val-249–Ala-269, and Ile-284–Asp-304.

The protein belongs to the binding-protein-dependent transport system permease family. AraH/RbsC subfamily. The complex is composed of two ATP-binding proteins (LsrA), two transmembrane proteins (LsrC and LsrD) and a solute-binding protein (LsrB).

The protein localises to the cell inner membrane. Part of the ABC transporter complex LsrABCD involved in autoinducer 2 (AI-2) import. Probably responsible for the translocation of the substrate across the membrane. This is Autoinducer 2 import system permease protein LsrC (lsrC) from Salmonella typhi.